We begin with the raw amino-acid sequence, 341 residues long: Arfaptin-2 (341 aa).

The interval 46–85 (NETSIVSGGYGGSGDGLIPTGSGRHPSHSTTPSGPGDEVA) is disordered. Position 72 is a phosphoserine (Ser72). Position 76 is a phosphothreonine (Thr76). In terms of domain architecture, AH spans 121–321 (TVDLELELQI…NQKQLEQTLQ (201 aa)).

Forms homodimers or heterodimers with ARFIP1. Interacts with RAC1. Specifically binds to GTP-bound ARF1 and ARF6, but binds to RAC1.GTP and RAC1.GDP with similar affinities. Interacts with ARL1. Interacts (via N-terminus) with IKBKB and IKBKG; these interactions inhibit activation of NF-kappa-B.

It is found in the golgi apparatus. The protein resides in the trans-Golgi network membrane. Its function is as follows. Plays a role in constitutive metalloproteinase (MMP) secretion from the trans Golgi network. May have important functions during vesicle biogenesis at certain cargo subdomains, which could be predominantly utilized by secreted MMPs, such as MMP7 and MMP2. Also involved in autophagy by regulating the starvation-dependent trafficking of ATG9A vesicles which deliver the phosphatidylinositol 4-kinase beta (PI4KB) to the autophagosome initiation site. Involved in phagophore growth during mitophagy by regulating ATG9A trafficking to mitochondria. In addition, plays a role in NF-kappa-B inhibition by interacting with IKBKB and IKBKG. The protein is Arfaptin-2 of Homo sapiens (Human).